We begin with the raw amino-acid sequence, 433 residues long: MTESVRLPAASLKPSTVALPGSKSISNRTLLLAALSDNVCEIHSLLKSDDTDRMLEALDKLGVQIEHLAEGRLKVHGTGGRFPNRSADLFLGNAGTAFRPLTAALAVLGGGYHLHGVPRMHERPIGDLVDALRIAGADVEYLGNEHYPPLHIGKRQDCGERVIPIKGNVSSQFLTALLMALPLTGQAFEIRMVGELISKPYIDITLKLMAQFGVQVANEGYRVFKIPADAHYHAPEHLHVEGDASGASYFLAAGLIAATPVRVTGIGANSIQGDVAFARELEKIGADVVWGENFVEVSRPKGRAVQAFDLDANHIPDAAMTLAIVALATRQTCTLRNIGSWRVKETDRIAAMANELRKLGAKVVEEAEAIHITPPETPTPDAVIDTYDDHRMAMCFSLISLLGVPVVINDPKCTHKTFPTYFEVFSSLTETAE.

Residues Lys-23, Ser-24, and Arg-28 each coordinate 3-phosphoshikimate. Lys-23 lines the phosphoenolpyruvate pocket. Residues Gly-95 and Arg-123 each coordinate phosphoenolpyruvate. 3-phosphoshikimate-binding residues include Ser-170, Ser-171, Gln-172, Ser-198, Asp-317, and Lys-344. Gln-172 contributes to the phosphoenolpyruvate binding site. Residue Asp-317 is the Proton acceptor of the active site. Positions 348, 391, and 416 each coordinate phosphoenolpyruvate.

It belongs to the EPSP synthase family. As to quaternary structure, monomer.

It localises to the cytoplasm. The catalysed reaction is 3-phosphoshikimate + phosphoenolpyruvate = 5-O-(1-carboxyvinyl)-3-phosphoshikimate + phosphate. It participates in metabolic intermediate biosynthesis; chorismate biosynthesis; chorismate from D-erythrose 4-phosphate and phosphoenolpyruvate: step 6/7. Its function is as follows. Catalyzes the transfer of the enolpyruvyl moiety of phosphoenolpyruvate (PEP) to the 5-hydroxyl of shikimate-3-phosphate (S3P) to produce enolpyruvyl shikimate-3-phosphate and inorganic phosphate. This chain is 3-phosphoshikimate 1-carboxyvinyltransferase, found in Neisseria gonorrhoeae (strain NCCP11945).